The following is a 92-amino-acid chain: Secreted RxLR effector protein 21 (92 aa).

The N-terminal stretch at 1–21 (MNLSTLLLTLACISQLHGGSA) is a signal peptide. Positions 30-33 (RQLR) match the RxLR motif.

It belongs to the RxLR effector family.

It localises to the secreted. The protein resides in the host nucleus. Its subcellular location is the host cytoplasm. In terms of biological role, secreted effector that completely suppresses the host cell death induced by cell death-inducing proteins. In Plasmopara viticola (Downy mildew of grapevine), this protein is Secreted RxLR effector protein 21.